We begin with the raw amino-acid sequence, 312 residues long: Short chain dehydrogenase pgmD (312 aa).

NADP(+) contacts are provided by Val46, Ile47, Lys171, Tyr207, Lys211, and Thr242. The Proton donor role is filled by Tyr207. Lys211 acts as the Lowers pKa of active site Tyr in catalysis.

The protein belongs to the short-chain dehydrogenases/reductases (SDR) family.

It functions in the pathway pigment biosynthesis. Its pathway is secondary metabolite biosynthesis. Short chain dehydrogenase; part of the gene cluster that mediates the biosynthesis of pleosporalin A, ascomycone A, as well as a third cryptic naphthoquinone derived pigment, all responsible for the coloration of conidia. Essential for the production of pleosporalin A, but not the 2 other final products. The pathway begins with the biosynthesis of the cyclized heptaketide 3-acetonyl-1,6,8-trihydroxy-2-naphthaldehyde by the NR-PKS pgmA. The C-6 hydroxyl group is further methylated by the O-methyltransferase pgmB to yield fusarubinaldehyde which is in turn oxidized by the cytochrome P450 monooxygenase pgmC at C-9. The C-1 hydroxyl group is then methylated spontaneously. Although pgmE, pgmD and pgmH are essential for the production of pleosporalin A, it is not the case for the 2 other final products and it remains difficult to assign a specific function to each enzyme. PgmF and pgmG seem not to be involved in pigment biosynthesis although they were regulated by the cluster-specific transcription factor pgmR. The chain is Short chain dehydrogenase pgmD from Aspergillus terreus.